The primary structure comprises 304 residues: Tyrosine recombinase XerC (304 aa).

The Core-binding (CB) domain maps to 6 to 92; sequence NKLYLQAQAY…VLRQWFAYLV (87 aa). Residues 113-292 enclose the Tyr recombinase domain; that stretch reads HLPKNIDAER…DFQHLAKIYD (180 aa). Residues arginine 152, lysine 176, histidine 244, arginine 247, and histidine 270 contribute to the active site. Residue tyrosine 279 is the O-(3'-phospho-DNA)-tyrosine intermediate of the active site.

Belongs to the 'phage' integrase family. XerC subfamily. As to quaternary structure, forms a cyclic heterotetrameric complex composed of two molecules of XerC and two molecules of XerD.

The protein localises to the cytoplasm. Functionally, site-specific tyrosine recombinase, which acts by catalyzing the cutting and rejoining of the recombining DNA molecules. The XerC-XerD complex is essential to convert dimers of the bacterial chromosome into monomers to permit their segregation at cell division. It also contributes to the segregational stability of plasmids. This Haemophilus ducreyi (strain 35000HP / ATCC 700724) protein is Tyrosine recombinase XerC.